A 78-amino-acid polypeptide reads, in one-letter code: Small ribosomal subunit protein bS21A (78 aa).

A compositionally biased stretch (basic and acidic residues) spans 30–52; the sequence is MKARSAYEKPSEKRAREKGEAVR. A disordered region spans residues 30-78; sequence MKARSAYEKPSEKRAREKGEAVRRQRKLARKKLQREGLLPAPKKAVRAR. The span at 53–62 shows a compositional bias: basic residues; the sequence is RQRKLARKKL.

This sequence belongs to the bacterial ribosomal protein bS21 family.

This Rhizobium etli (strain ATCC 51251 / DSM 11541 / JCM 21823 / NBRC 15573 / CFN 42) protein is Small ribosomal subunit protein bS21A.